The chain runs to 610 residues: Dopamine beta-hydroxylase (610 aa).

The Cytoplasmic segment spans residues Met-1–Arg-9. Residues Glu-10–Leu-30 form a helical; Signal-anchor for type II membrane protein membrane-spanning segment. The Intragranular segment spans residues Gln-31–Gly-610. A DOMON domain is found at Gly-50 to Leu-166. Residues Asn-57, Asn-177, and Asn-194 are each glycosylated (N-linked (GlcNAc...) asparagine). 6 disulfide bridges follow: Cys-147-Cys-589, Cys-225-Cys-276, Cys-262-Cys-288, Cys-383-Cys-496, Cys-387-Cys-558, and Cys-459-Cys-481. Tyr-223 is a catalytic residue. Positions 255 and 256 each coordinate Cu(2+). Positions 326, 405, 407, and 480 each coordinate Cu(2+). Residue His-405 is part of the active site. The segment at Thr-586–Gly-610 is disordered.

This sequence belongs to the copper type II ascorbate-dependent monooxygenase family. As to quaternary structure, homotetramer; composed of two disulfide-linked dimers. The cofactor is Cu(2+). Post-translationally, proteolytic cleavage after the membrane-anchor leads to the release of the soluble form. N-glycosylated. As to expression, detected in adrenal medulla chromaffin cells.

The protein localises to the cytoplasmic vesicle. Its subcellular location is the secretory vesicle lumen. The protein resides in the secretory vesicle. It localises to the chromaffin granule lumen. It is found in the secreted. The protein localises to the secretory vesicle membrane. Its subcellular location is the chromaffin granule membrane. The catalysed reaction is dopamine + 2 L-ascorbate + O2 = (R)-noradrenaline + 2 monodehydro-L-ascorbate radical + H2O. It participates in catecholamine biosynthesis; (R)-noradrenaline biosynthesis; (R)-noradrenaline from dopamine: step 1/1. Its function is as follows. Catalyzes the hydroxylation of dopamine to noradrenaline (also known as norepinephrine), and is thus vital for regulation of these neurotransmitters. In Equus caballus (Horse), this protein is Dopamine beta-hydroxylase (DBH).